Here is a 212-residue protein sequence, read N- to C-terminus: Inner membrane-spanning protein YciB (212 aa).

5 helical membrane-spanning segments follow: residues 49–69 (APVL…VLYL), 78–98 (TMLW…IWFH), 105–125 (WKPS…PIVA), 150–170 (LAWA…AYNF), and 178–198 (FKAF…GLYM).

The protein belongs to the YciB family.

It localises to the cell inner membrane. Its function is as follows. Plays a role in cell envelope biogenesis, maintenance of cell envelope integrity and membrane homeostasis. This Leptothrix cholodnii (strain ATCC 51168 / LMG 8142 / SP-6) (Leptothrix discophora (strain SP-6)) protein is Inner membrane-spanning protein YciB.